The following is a 139-amino-acid chain: Nucleoside diphosphate kinase (139 aa).

Positions 11, 59, 87, 93, 104, and 114 each coordinate ATP. Catalysis depends on H117, which acts as the Pros-phosphohistidine intermediate.

This sequence belongs to the NDK family. In terms of assembly, homotetramer. Mg(2+) serves as cofactor.

It is found in the cytoplasm. It carries out the reaction a 2'-deoxyribonucleoside 5'-diphosphate + ATP = a 2'-deoxyribonucleoside 5'-triphosphate + ADP. The catalysed reaction is a ribonucleoside 5'-diphosphate + ATP = a ribonucleoside 5'-triphosphate + ADP. Its function is as follows. Major role in the synthesis of nucleoside triphosphates other than ATP. The ATP gamma phosphate is transferred to the NDP beta phosphate via a ping-pong mechanism, using a phosphorylated active-site intermediate. This Wolbachia pipientis subsp. Culex pipiens (strain wPip) protein is Nucleoside diphosphate kinase.